Here is a 196-residue protein sequence, read N- to C-terminus: Probable nicotinate-nucleotide adenylyltransferase (196 aa).

Belongs to the NadD family.

It carries out the reaction nicotinate beta-D-ribonucleotide + ATP + H(+) = deamido-NAD(+) + diphosphate. Its pathway is cofactor biosynthesis; NAD(+) biosynthesis; deamido-NAD(+) from nicotinate D-ribonucleotide: step 1/1. Its function is as follows. Catalyzes the reversible adenylation of nicotinate mononucleotide (NaMN) to nicotinic acid adenine dinucleotide (NaAD). In Caldicellulosiruptor saccharolyticus (strain ATCC 43494 / DSM 8903 / Tp8T 6331), this protein is Probable nicotinate-nucleotide adenylyltransferase.